The primary structure comprises 475 residues: Aspartate ammonia-lyase (475 aa).

L-aspartate-binding residues include Thr104, Ser143, Thr144, Asn145, Thr190, and His191. An SS loop region spans residues 320-329; the sequence is GSSIMPGKVN. Ser321 functions as the Proton acceptor in the catalytic mechanism. L-aspartate is bound by residues Ser322 and Lys327.

The protein belongs to the class-II fumarase/aspartase family. Aspartase subfamily. As to quaternary structure, homotetramer.

It catalyses the reaction L-aspartate = fumarate + NH4(+). In terms of biological role, catalyzes the reversible conversion of L-aspartate to fumarate and ammonia. The sequence is that of Aspartate ammonia-lyase from Bacillus subtilis (strain 168).